The sequence spans 463 residues: Glycine--tRNA ligase (463 aa).

Substrate-binding residues include Arg-98 and Glu-174. ATP is bound by residues 206–208, 216–221, 290–291, and 334–337; these read RNE, FRTREF, EL, and GADR. 221–225 contacts substrate; that stretch reads FEQME. 330–334 is a binding site for substrate; sequence EPSLG.

It belongs to the class-II aminoacyl-tRNA synthetase family. Homodimer.

Its subcellular location is the cytoplasm. The enzyme catalyses tRNA(Gly) + glycine + ATP = glycyl-tRNA(Gly) + AMP + diphosphate. Functionally, catalyzes the attachment of glycine to tRNA(Gly). In Staphylococcus saprophyticus subsp. saprophyticus (strain ATCC 15305 / DSM 20229 / NCIMB 8711 / NCTC 7292 / S-41), this protein is Glycine--tRNA ligase.